A 207-amino-acid polypeptide reads, in one-letter code: Small ribosomal subunit protein uS4c (207 aa).

An S4 RNA-binding domain is found at 92–156; sequence MRLDNILFRL…YQSIITKRIE (65 aa).

The protein belongs to the universal ribosomal protein uS4 family. As to quaternary structure, part of the 30S ribosomal subunit. Contacts protein S5. The interaction surface between S4 and S5 is involved in control of translational fidelity.

The protein localises to the plastid. It localises to the chloroplast. In terms of biological role, one of the primary rRNA binding proteins, it binds directly to 16S rRNA where it nucleates assembly of the body of the 30S subunit. Functionally, with S5 and S12 plays an important role in translational accuracy. In Equisetum palustre (Marsh horsetail), this protein is Small ribosomal subunit protein uS4c (rps4).